Here is an 88-residue protein sequence, read N- to C-terminus: uncharacterized protein (88 aa).

The tract at residues 1 to 88 (MPHLPELSKQ…IRRGNPSGVA (88 aa)) is disordered. The segment covering 21–65 (YRAKGEDLENSHHNNESRLAEGVHYDRNKAPALQEREKASTEKVN) has biased composition (basic and acidic residues).

Involved in osmoadaptation. This is an uncharacterized protein from Emericella nidulans (strain FGSC A4 / ATCC 38163 / CBS 112.46 / NRRL 194 / M139) (Aspergillus nidulans).